The chain runs to 208 residues: Redox-sensing transcriptional repressor Rex (208 aa).

The H-T-H motif DNA-binding region spans 18–57; the sequence is IYYRYFKLLETDGIERIKSEQLAKLVAIPSATIRRDFSYI. Position 92–97 (92–97) interacts with NAD(+); it reads GVGNLG.

The protein belongs to the transcriptional regulatory Rex family. As to quaternary structure, homodimer.

The protein resides in the cytoplasm. Modulates transcription in response to changes in cellular NADH/NAD(+) redox state. This Latilactobacillus sakei subsp. sakei (strain 23K) (Lactobacillus sakei subsp. sakei) protein is Redox-sensing transcriptional repressor Rex.